The following is a 208-amino-acid chain: Nascent polypeptide-associated complex subunit alpha (208 aa).

Positions 1-19 (MSSSRIEELPDDDVPKTTV) are enriched in basic and acidic residues. Disordered stretches follow at residues 1 to 50 (MSSS…HSRN) and 120 to 166 (QLAA…VFDA). A compositionally biased stretch (acidic residues) spans 21–34 (DAADSSESEVEGAE). The NAC-A/B domain maps to 48-113 (SRNEKKARKA…AKIEDLNSQA (66 aa)). A compositionally biased stretch (low complexity) spans 120-131 (QLAAAEAAGSNE). Basic and acidic residues predominate over residues 132 to 154 (HAGHDHASHDHGKGKAVESADKK). Over residues 155–164 (DEEEDDEEVF) the composition is skewed to acidic residues. Positions 169 to 208 (LEAKDIELVMAQASVSRNKAIKALKENDNDIVNSIMALSV) constitute a UBA domain.

The protein belongs to the NAC-alpha family. In terms of assembly, part of the nascent polypeptide-associated complex (NAC), consisting of EGD2 and EGD1. NAC associates with ribosomes via EGD1.

The protein resides in the cytoplasm. The protein localises to the nucleus. Functionally, component of the nascent polypeptide-associated complex (NAC), a dynamic component of the ribosomal exit tunnel, protecting the emerging polypeptides from interaction with other cytoplasmic proteins to ensure appropriate nascent protein targeting. The NAC complex also promotes mitochondrial protein import by enhancing productive ribosome interactions with the outer mitochondrial membrane and blocks the inappropriate interaction of ribosomes translating non-secretory nascent polypeptides with translocation sites in the membrane of the endoplasmic reticulum. EGD2 may also be involved in transcription regulation. This is Nascent polypeptide-associated complex subunit alpha (EGD2) from Ajellomyces capsulatus (strain NAm1 / WU24) (Darling's disease fungus).